The primary structure comprises 380 residues: Cytochrome b (380 aa).

Transmembrane regions (helical) follow at residues 34–54, 78–99, 114–134, and 179–199; these read FGSL…LLAT, WLIR…YLHI, WNTG…GYVL, and FFAL…IHLA. Histidine 84 and histidine 98 together coordinate heme b. Residues histidine 183 and histidine 197 each contribute to the heme b site. Histidine 202 contributes to the a ubiquinone binding site. 4 consecutive transmembrane segments (helical) span residues 227–247, 289–309, 321–341, and 348–368; these read LKDI…ALFS, LGGV…PFLH, LSQI…WIGS, and FIII…ILFP.

The protein belongs to the cytochrome b family. The cytochrome bc1 complex contains 11 subunits: 3 respiratory subunits (MT-CYB, CYC1 and UQCRFS1), 2 core proteins (UQCRC1 and UQCRC2) and 6 low-molecular weight proteins (UQCRH/QCR6, UQCRB/QCR7, UQCRQ/QCR8, UQCR10/QCR9, UQCR11/QCR10 and a cleavage product of UQCRFS1). This cytochrome bc1 complex then forms a dimer. Heme b serves as cofactor.

It is found in the mitochondrion inner membrane. In terms of biological role, component of the ubiquinol-cytochrome c reductase complex (complex III or cytochrome b-c1 complex) that is part of the mitochondrial respiratory chain. The b-c1 complex mediates electron transfer from ubiquinol to cytochrome c. Contributes to the generation of a proton gradient across the mitochondrial membrane that is then used for ATP synthesis. The protein is Cytochrome b (MT-CYB) of Callipepla gambelii (Gambel's quail).